A 1026-amino-acid polypeptide reads, in one-letter code: Multidrug resistance protein MdtC (1026 aa).

11 helical membrane passes run 15 to 35 (ILIA…LPVA), 333 to 353 (EVEE…FLFL), 360 to 380 (LIPA…MYLC), 387 to 407 (LSLM…IVVL), 431 to 451 (VGFT…PLLL), 463 to 483 (FAVT…TLTP), 528 to 548 (LVGV…IAIP), 853 to 873 (LILI…LYES), 897 to 917 (LFNA…IGIV), 953 to 973 (PIMM…LSGG), and 984 to 1004 (ITIV…TPVV).

Belongs to the resistance-nodulation-cell division (RND) (TC 2.A.6) family. MdtC subfamily. In terms of assembly, part of a tripartite efflux system composed of MdtA, MdtB and MdtC. MdtC forms a heteromultimer with MdtB.

It localises to the cell inner membrane. This chain is Multidrug resistance protein MdtC, found in Salmonella agona (strain SL483).